The sequence spans 171 residues: Co-chaperone protein HscB (171 aa).

The J domain maps to 2–74 (DYFTLFGLPA…LTRAEYLLSL (73 aa)).

This sequence belongs to the HscB family. Interacts with HscA and stimulates its ATPase activity. Interacts with IscU.

In terms of biological role, co-chaperone involved in the maturation of iron-sulfur cluster-containing proteins. Seems to help targeting proteins to be folded toward HscA. In Klebsiella pneumoniae (strain 342), this protein is Co-chaperone protein HscB.